A 289-amino-acid polypeptide reads, in one-letter code: N-methyltransferase FrzE (289 aa).

Belongs to the methyltransferase superfamily.

The catalysed reaction is (1S,4S)-4-[(4-hydroxyphenyl)methyl]-2,5-diazaspiro[bicyclo[3.2.1]octane-6,1'-cyclohexan]-4'-one + S-adenosyl-L-methionine = (1S,4S)-4-[(4-hydroxyphenyl)methyl]-2-methyl-2,5-diazaspiro[bicyclo[3.2.1]octane-6,1'-cyclohexan]-4'-one + S-adenosyl-L-homocysteine + H(+). It carries out the reaction (1S,4S)-4-[(4-methoxyphenyl)methyl]-2,5-diazaspiro[bicyclo[3.2.1]octane-6,1'-cyclohexan]-4'-one + S-adenosyl-L-methionine = (1S,4S)-4-[(4-methoxyphenyl)methyl]-2-methyl-2,5-diazaspiro[bicyclo[3.2.1]octane-6,1'-cyclohexan]-4'-one + S-adenosyl-L-homocysteine + H(+). Its pathway is secondary metabolite biosynthesis. Its function is as follows. N-methyltransferase; part of the gene cluster that mediates the biosynthesis of the alkaloid (-)-FR901483, a potent immunosuppressant that shows efficacy in animal models and a probable inhibitor of purine nucleotide biosynthesis by targeting phosphoribosylpyrophosphate amidotransferase (PPAT). Within the pathway, FrzE methylates the amine at position C10'. The biosynthesis of (-)-FR901483 starts with the condensation of two L-tyrosines to yield (S,S)-dityrosyl-piperazine. This process occurs in 3 steps with the non-canonical nonribosomal peptide synthetase FrzA catalyzing the reduction of L-tyrosine into L-tyrosinal, the spontaneous condensation of 2 L-tyrosinal units, and the subsequent reduction by the NmrA-like family domain-containing oxidoreductase FrzB. The cytochrome P450 monooxygenase FrzC then performs coupling between N10 and C1' to morph the piperazine into a 1,4-diazabicyclo[3.2.1]octane spiro-fused to a 2,5-cyclohexadienone. The dienone portion is further reduced to cyclohexanone by the flavin-dependent reductase FrzD. The methyltranserases (MTs) FrzE and FrzF are then involved in the methylation at the C10' amine and the C4 phenolic oxygen, respectively. The order of the two MTs appear to be interchangeable. Cleavage of the C9-N10' bond by the dioxygenase FrzG then leads to formation of a conjugated iminium. In addition to the oxidation of C9, an additional dehydrogenation between C7 and C8 can occur to give a likely shunt product. The next biosynthetic step is the intramolecular aldol condensation catalyzed by the newly identified aldolase FrzH to yield an aza-tricyclic product with the formation of a C9-C3' bond. The short-chain dehydrogenase/reductase FrzI then produces dephospho-(-)-FR901483 that is phosphorylated at C4'-OH into (-)-FR901483 by the phosphotransferase FrzJ. This chain is N-methyltransferase FrzE, found in Cladobotryum sp.